The chain runs to 386 residues: Cytochrome b (386 aa).

A run of 4 helical transmembrane segments spans residues 32-52 (FGSL…TLAM), 76-98 (WMIR…LHIG), 113-133 (PWSI…LGYV), and 179-199 (FFSL…MHLL). Heme b-binding residues include His-82 and His-96. Residues His-183 and His-197 each contribute to the heme b site. His-202 serves as a coordination point for a ubiquinone. 4 helical membrane-spanning segments follow: residues 225-245 (YTFK…LFLF), 289-309 (LGGV…PLLD), 321-341 (LMKF…WCGS), and 348-368 (FITL…IIVP).

The protein belongs to the cytochrome b family. In terms of assembly, fungal cytochrome b-c1 complex contains 10 subunits; 3 respiratory subunits, 2 core proteins and 5 low-molecular weight proteins. Cytochrome b-c1 complex is a homodimer. Requires heme b as cofactor.

It localises to the mitochondrion inner membrane. Its function is as follows. Component of the ubiquinol-cytochrome c reductase complex (complex III or cytochrome b-c1 complex) that is part of the mitochondrial respiratory chain. The b-c1 complex mediates electron transfer from ubiquinol to cytochrome c. Contributes to the generation of a proton gradient across the mitochondrial membrane that is then used for ATP synthesis. The protein is Cytochrome b (cob) of Rhizopus oryzae (Mucormycosis agent).